Here is a 373-residue protein sequence, read N- to C-terminus: Chaperone protein DnaJ (373 aa).

The region spanning 4–69 (SYYEILEITQ…EKRAIYDRYG (66 aa)) is the J domain. A CR-type zinc finger spans residues 135–212 (GCKKNIDFTY…CKGLGYNESK (78 aa)). Positions 148, 151, 164, 167, 186, 189, 200, and 203 each coordinate Zn(2+). CXXCXGXG motif repeat units lie at residues 148–155 (CKTCNGTG), 164–171 (CPKCQGRG), 186–193 (CPDCQGIG), and 200–207 (CSDCKGLG).

The protein belongs to the DnaJ family. As to quaternary structure, homodimer. The cofactor is Zn(2+).

The protein localises to the cytoplasm. Participates actively in the response to hyperosmotic and heat shock by preventing the aggregation of stress-denatured proteins and by disaggregating proteins, also in an autonomous, DnaK-independent fashion. Unfolded proteins bind initially to DnaJ; upon interaction with the DnaJ-bound protein, DnaK hydrolyzes its bound ATP, resulting in the formation of a stable complex. GrpE releases ADP from DnaK; ATP binding to DnaK triggers the release of the substrate protein, thus completing the reaction cycle. Several rounds of ATP-dependent interactions between DnaJ, DnaK and GrpE are required for fully efficient folding. Also involved, together with DnaK and GrpE, in the DNA replication of plasmids through activation of initiation proteins. This Campylobacter jejuni (strain RM1221) protein is Chaperone protein DnaJ.